We begin with the raw amino-acid sequence, 262 residues long: MNDILAKILAVKAEEVATARQMRSEAELLREAQARQDVRGFAQAIEDKISQGKAGVIAEIKKASPSKGVLRENFDPAEIAASYAMHGAACLSVLTDVQFFQGSHDNLRRARAACSLPVLRKDFIIDPYQIISARAMGADCVLLIVATLAPAQLRDLETLAIDLGMDVLVEVHDAKELDAALALRTPLIGINNRNLRTFETTLQTTLDLLPMIPAGKRVVTESGILKPEDVRLMREHDVQAFLVGEAFMRANDPGVELARLVA.

The protein belongs to the TrpC family.

It catalyses the reaction 1-(2-carboxyphenylamino)-1-deoxy-D-ribulose 5-phosphate + H(+) = (1S,2R)-1-C-(indol-3-yl)glycerol 3-phosphate + CO2 + H2O. Its pathway is amino-acid biosynthesis; L-tryptophan biosynthesis; L-tryptophan from chorismate: step 4/5. The protein is Indole-3-glycerol phosphate synthase of Bordetella pertussis (strain Tohama I / ATCC BAA-589 / NCTC 13251).